The chain runs to 211 residues: Urease accessory protein UreG (211 aa).

11–18 lines the GTP pocket; the sequence is GPVGAGKT.

It belongs to the SIMIBI class G3E GTPase family. UreG subfamily. In terms of assembly, homodimer. UreD, UreF and UreG form a complex that acts as a GTP-hydrolysis-dependent molecular chaperone, activating the urease apoprotein by helping to assemble the nickel containing metallocenter of UreC. The UreE protein probably delivers the nickel.

It is found in the cytoplasm. Its function is as follows. Facilitates the functional incorporation of the urease nickel metallocenter. This process requires GTP hydrolysis, probably effectuated by UreG. This Actinobacillus pleuropneumoniae serotype 3 (strain JL03) protein is Urease accessory protein UreG.